Here is a 448-residue protein sequence, read N- to C-terminus: C4-dicarboxylate transport protein (448 aa).

Helical transmembrane passes span 20–38, 53–75, 88–110, 161–178, 199–220, 230–252, 325–347, and 362–384; these read LYFQVLVAIIAGIALGHFY, IRLVKMIIAPVIFLTVATGIAGM, AMIYFLVFSTLALIVGLIVANTV, ILQVLFFSVLFGIALGIV, LVAILMKAAPIGAFGAMAFTIG, LAMLIGTFYITSALFVFVVLGAV, LFIAQATGIHLSFGEQILLLLVA, and FITLAATLSVVPSVPVAGMALIL.

It belongs to the dicarboxylate/amino acid:cation symporter (DAACS) (TC 2.A.23) family.

It is found in the cell inner membrane. In terms of biological role, responsible for the transport of dicarboxylates such as succinate, fumarate, and malate from the periplasm across the membrane. This chain is C4-dicarboxylate transport protein, found in Agrobacterium fabrum (strain C58 / ATCC 33970) (Agrobacterium tumefaciens (strain C58)).